Consider the following 301-residue polypeptide: Transcriptional activator protein NhaR (301 aa).

In terms of domain architecture, HTH lysR-type spans 6-63 (INYNHLYYFWHVYKEGSVVGAAEALYLTPQTITGQIRALEERLQGKLFKRKGRGLEPS). The H-T-H motif DNA-binding region spans 23–42 (VVGAAEALYLTPQTITGQIR).

Belongs to the LysR transcriptional regulatory family.

It localises to the cytoplasm. Functionally, plays a role in the positive regulation of NhaA. The protein is Transcriptional activator protein NhaR (nhaR) of Escherichia coli (strain K12).